A 78-amino-acid chain; its full sequence is Large ribosomal subunit protein bL28 (78 aa).

The segment at 1-31 (MAAHCQVTGAEPGFGHSISHSHRRNKRRFDP) is disordered.

It belongs to the bacterial ribosomal protein bL28 family.

The sequence is that of Large ribosomal subunit protein bL28 from Arthrobacter sp. (strain FB24).